The primary structure comprises 419 residues: Peptide chain release factor subunit 1 (419 aa).

The protein belongs to the eukaryotic release factor 1 family. As to quaternary structure, heterodimer of two subunits, one of which binds GTP.

The protein resides in the cytoplasm. Functionally, directs the termination of nascent peptide synthesis (translation) in response to the termination codons UAA, UAG and UGA. This is Peptide chain release factor subunit 1 from Methanococcus maripaludis (strain C6 / ATCC BAA-1332).